Reading from the N-terminus, the 153-residue chain is MSAKLKQLEDILRPVVEGLGYEFWGIEFRSHGHHSKLRVFIDDAENGIAIDDCEKVSRQVSGVMDVEDPIQTEYTLEVSSPGMDRPLFRLEQYEAFIGHKVQIKLRMAFEGRRKFLGLIKGVEGDDVVVVVDDHEYLLPFDSIEKANIVPVFE.

The protein belongs to the RimP family.

It localises to the cytoplasm. Required for maturation of 30S ribosomal subunits. This chain is Ribosome maturation factor RimP, found in Marinobacter nauticus (strain ATCC 700491 / DSM 11845 / VT8) (Marinobacter aquaeolei).